Here is a 165-residue protein sequence, read N- to C-terminus: Large ribosomal subunit protein mL49 (165 aa).

Positions 42-75 are enriched in low complexity; sequence TTATTTTPLQQQQQQQPTTQPTTPIQTQTGAAPT. The interval 42–81 is disordered; the sequence is TTATTTTPLQQQQQQQPTTQPTTPIQTQTGAAPTESTKPV.

It belongs to the mitochondrion-specific ribosomal protein mL49 family. In terms of assembly, component of the mitochondrial large ribosomal subunit (mt-LSU). Mature N.crassa 74S mitochondrial ribosomes consist of a small (37S) and a large (54S) subunit. The 37S small subunit contains a 16S ribosomal RNA (16S mt-rRNA) and 32 different proteins. The 54S large subunit contains a 23S rRNA (23S mt-rRNA) and 42 different proteins.

Its subcellular location is the mitochondrion. Functionally, component of the mitochondrial ribosome (mitoribosome), a dedicated translation machinery responsible for the synthesis of mitochondrial genome-encoded proteins, including at least some of the essential transmembrane subunits of the mitochondrial respiratory chain. The mitoribosomes are attached to the mitochondrial inner membrane and translation products are cotranslationally integrated into the membrane. The protein is Large ribosomal subunit protein mL49 (img2) of Neurospora crassa (strain ATCC 24698 / 74-OR23-1A / CBS 708.71 / DSM 1257 / FGSC 987).